The following is a 399-amino-acid chain: MTRIGTPLSPSATRVMLLGAGELGKEVIIALQRLGVEVIAVDRYENAPGHQVAHRAHVIPMTDASALRELVLREKPDLIVPEIEAIATDELARIEAEGIARVIPTARATQLTMNREGIRRLAAEELGLQTSRYAFADSLESLTAAIDGGIGYPCIIKPVMSSSGKGQSLVADASELTRAWDYARSAGRVDQGRVIVEAVVEFDFEITLLTVRSRGGDGNIRTDFCAPVGHRQVKGDYVESWQPQPMSETALDTAREMAAAVTGALGGQGLFGVEFFVRGDEVWFSEVSPRPHDTGLVTLATQWQSEFELHARAILGLPVDTRLRNPGASAVIYGGVEAQGVAFENVDQALAVPGTDIRLFGKPEAFERRRMGVAVAHGDDIEDCRARAREAAGRVRVVV.

Residues 22 to 23 (EL) and Glu82 each bind N(1)-(5-phospho-beta-D-ribosyl)glycinamide. ATP contacts are provided by residues Arg115, Lys157, 162-167 (SSGKGQ), 197-200 (EAVV), and Glu205. Positions 120-315 (RLAAEELGLQ…EFELHARAIL (196 aa)) constitute an ATP-grasp domain. Mg(2+) contacts are provided by Glu274 and Glu286. N(1)-(5-phospho-beta-D-ribosyl)glycinamide contacts are provided by residues Asp293, Lys362, and 369–370 (RR).

Belongs to the PurK/PurT family. In terms of assembly, homodimer.

The enzyme catalyses N(1)-(5-phospho-beta-D-ribosyl)glycinamide + formate + ATP = N(2)-formyl-N(1)-(5-phospho-beta-D-ribosyl)glycinamide + ADP + phosphate + H(+). It functions in the pathway purine metabolism; IMP biosynthesis via de novo pathway; N(2)-formyl-N(1)-(5-phospho-D-ribosyl)glycinamide from N(1)-(5-phospho-D-ribosyl)glycinamide (formate route): step 1/1. In terms of biological role, involved in the de novo purine biosynthesis. Catalyzes the transfer of formate to 5-phospho-ribosyl-glycinamide (GAR), producing 5-phospho-ribosyl-N-formylglycinamide (FGAR). Formate is provided by PurU via hydrolysis of 10-formyl-tetrahydrofolate. This chain is Formate-dependent phosphoribosylglycinamide formyltransferase, found in Thioalkalivibrio sulfidiphilus (strain HL-EbGR7).